We begin with the raw amino-acid sequence, 382 residues long: Methylthioribose-1-phosphate isomerase (382 aa).

The active-site Proton donor is Asp261.

It belongs to the eIF-2B alpha/beta/delta subunits family. MtnA subfamily.

The protein resides in the cytoplasm. The protein localises to the nucleus. The catalysed reaction is 5-(methylsulfanyl)-alpha-D-ribose 1-phosphate = 5-(methylsulfanyl)-D-ribulose 1-phosphate. It participates in amino-acid biosynthesis; L-methionine biosynthesis via salvage pathway; L-methionine from S-methyl-5-thio-alpha-D-ribose 1-phosphate: step 1/6. Functionally, catalyzes the interconversion of methylthioribose-1-phosphate (MTR-1-P) into methylthioribulose-1-phosphate (MTRu-1-P). In Ricinus communis (Castor bean), this protein is Methylthioribose-1-phosphate isomerase.